The sequence spans 1377 residues: DNA-directed RNA polymerase subunit beta' (1377 aa).

Cysteine 70, cysteine 72, cysteine 85, and cysteine 88 together coordinate Zn(2+). Residues aspartate 460, aspartate 462, and aspartate 464 each coordinate Mg(2+). Zn(2+) is bound by residues cysteine 808, cysteine 882, cysteine 889, and cysteine 892.

Belongs to the RNA polymerase beta' chain family. The RNAP catalytic core consists of 2 alpha, 1 beta, 1 beta' and 1 omega subunit. When a sigma factor is associated with the core the holoenzyme is formed, which can initiate transcription. The cofactor is Mg(2+). Zn(2+) serves as cofactor.

It catalyses the reaction RNA(n) + a ribonucleoside 5'-triphosphate = RNA(n+1) + diphosphate. DNA-dependent RNA polymerase catalyzes the transcription of DNA into RNA using the four ribonucleoside triphosphates as substrates. The polypeptide is DNA-directed RNA polymerase subunit beta' (Geotalea uraniireducens (strain Rf4) (Geobacter uraniireducens)).